A 358-amino-acid polypeptide reads, in one-letter code: Nicotinate-nucleotide--dimethylbenzimidazole phosphoribosyltransferase (358 aa).

Glutamate 313 serves as the catalytic Proton acceptor.

Belongs to the CobT family.

It catalyses the reaction 5,6-dimethylbenzimidazole + nicotinate beta-D-ribonucleotide = alpha-ribazole 5'-phosphate + nicotinate + H(+). It participates in nucleoside biosynthesis; alpha-ribazole biosynthesis; alpha-ribazole from 5,6-dimethylbenzimidazole: step 1/2. Its function is as follows. Catalyzes the synthesis of alpha-ribazole-5'-phosphate from nicotinate mononucleotide (NAMN) and 5,6-dimethylbenzimidazole (DMB). The chain is Nicotinate-nucleotide--dimethylbenzimidazole phosphoribosyltransferase from Corynebacterium glutamicum (strain R).